The sequence spans 278 residues: Ribosomal RNA small subunit methyltransferase A (278 aa).

Residues Asn27, Leu29, Gly54, Glu75, Asp95, and Asn118 each contribute to the S-adenosyl-L-methionine site.

Belongs to the class I-like SAM-binding methyltransferase superfamily. rRNA adenine N(6)-methyltransferase family. RsmA subfamily.

It is found in the cytoplasm. The catalysed reaction is adenosine(1518)/adenosine(1519) in 16S rRNA + 4 S-adenosyl-L-methionine = N(6)-dimethyladenosine(1518)/N(6)-dimethyladenosine(1519) in 16S rRNA + 4 S-adenosyl-L-homocysteine + 4 H(+). Specifically dimethylates two adjacent adenosines (A1518 and A1519) in the loop of a conserved hairpin near the 3'-end of 16S rRNA in the 30S particle. May play a critical role in biogenesis of 30S subunits. This chain is Ribosomal RNA small subunit methyltransferase A, found in Chlamydia caviae (strain ATCC VR-813 / DSM 19441 / 03DC25 / GPIC) (Chlamydophila caviae).